Consider the following 353-residue polypeptide: Histidinol-phosphate aminotransferase (353 aa).

K211 carries the post-translational modification N6-(pyridoxal phosphate)lysine.

It belongs to the class-II pyridoxal-phosphate-dependent aminotransferase family. Histidinol-phosphate aminotransferase subfamily. In terms of assembly, homodimer. Pyridoxal 5'-phosphate is required as a cofactor.

The catalysed reaction is L-histidinol phosphate + 2-oxoglutarate = 3-(imidazol-4-yl)-2-oxopropyl phosphate + L-glutamate. It functions in the pathway amino-acid biosynthesis; L-histidine biosynthesis; L-histidine from 5-phospho-alpha-D-ribose 1-diphosphate: step 7/9. The chain is Histidinol-phosphate aminotransferase from Klebsiella pneumoniae subsp. pneumoniae (strain ATCC 700721 / MGH 78578).